The sequence spans 334 residues: Aspartate carbamoyltransferase catalytic subunit (334 aa).

Carbamoyl phosphate is bound by residues arginine 71 and threonine 72. L-aspartate is bound at residue lysine 99. Residues arginine 121, histidine 151, and glutamine 154 each coordinate carbamoyl phosphate. L-aspartate contacts are provided by arginine 184 and arginine 239. Glycine 280 and proline 281 together coordinate carbamoyl phosphate.

This sequence belongs to the aspartate/ornithine carbamoyltransferase superfamily. ATCase family. In terms of assembly, heterododecamer (2C3:3R2) of six catalytic PyrB chains organized as two trimers (C3), and six regulatory PyrI chains organized as three dimers (R2).

It carries out the reaction carbamoyl phosphate + L-aspartate = N-carbamoyl-L-aspartate + phosphate + H(+). Its pathway is pyrimidine metabolism; UMP biosynthesis via de novo pathway; (S)-dihydroorotate from bicarbonate: step 2/3. In terms of biological role, catalyzes the condensation of carbamoyl phosphate and aspartate to form carbamoyl aspartate and inorganic phosphate, the committed step in the de novo pyrimidine nucleotide biosynthesis pathway. In Pseudomonas fluorescens (strain ATCC BAA-477 / NRRL B-23932 / Pf-5), this protein is Aspartate carbamoyltransferase catalytic subunit.